Reading from the N-terminus, the 37-residue chain is Mu-thomitoxin-Hme1a (37 aa).

3 disulfide bridges follow: Cys2–Cys18, Cys9–Cys22, and Cys17–Cys33. Phe37 is subject to Phenylalanine amide.

This sequence belongs to the neurotoxin 01 (U2-agtx) family. Post-translationally, contains 3 disulfide bonds. As to expression, expressed by the venom gland.

The protein localises to the secreted. In terms of biological role, blocks the Nav1.2/SCN2A, Nav1.4/SCN4A, and Nav1.6/SCN8A sodium channels. Reduces the peak amplitude of the sodium current and negatively shifts the steady-state inactivation process. Does not shift the threshold potential of activation or the voltage corresponding to maximal current. Does not change the reversal potential of the sodium current. May act on site 1 of the receptor. This chain is Mu-thomitoxin-Hme1a, found in Heriaeus mellotteei (Crab spider).